The sequence spans 172 residues: Adenine phosphoribosyltransferase (172 aa).

The protein belongs to the purine/pyrimidine phosphoribosyltransferase family. As to quaternary structure, homodimer.

The protein localises to the cytoplasm. It carries out the reaction AMP + diphosphate = 5-phospho-alpha-D-ribose 1-diphosphate + adenine. Its pathway is purine metabolism; AMP biosynthesis via salvage pathway; AMP from adenine: step 1/1. Functionally, catalyzes a salvage reaction resulting in the formation of AMP, that is energically less costly than de novo synthesis. This chain is Adenine phosphoribosyltransferase, found in Prochlorococcus marinus (strain NATL2A).